The sequence spans 898 residues: Endoplasmic reticulum metallopeptidase 1 (898 aa).

Methionine 1 carries the N-acetylmethionine modification. Positions 1 to 59 (MEWSSESAAVRRHRGTAERREGQAAASHPQREASAQEDARGGGRMRGRTESGGESRGAK) are disordered. Residues 1–66 (MEWSSESAAV…GAKTALSEAR (66 aa)) are Cytoplasmic-facing. The span at 37–57 (EDARGGGRMRGRTESGGESRG) shows a compositional bias: basic and acidic residues. Residues 67–87 (TALALALYLLALRALVQLSLQ) traverse the membrane as a helical segment. The Lumenal portion of the chain corresponds to 88–393 (RLVLSRTSGL…SSSEYRHGSM (306 aa)). An N-linked (GlcNAc...) asparagine glycan is attached at asparagine 176. A disulfide bridge links cysteine 198 with cysteine 216. Residues histidine 199 and aspartate 211 each coordinate Zn(2+). Residue glutamate 245 is the Proton acceptor of the active site. Glutamate 246, glutamate 272, and histidine 348 together coordinate Zn(2+). The helical transmembrane segment at 394–414 (VFFDVLGLLVIAYPSRVGSII) threads the bilayer. The Cytoplasmic portion of the chain corresponds to 415–451 (NYMVVMAVVLYLGRKLLRPNHSNSNYVRDFLCGLGIT). Residues 452–472 (FISWFTSLVTVLIIAVFVSLI) form a helical membrane-spanning segment. The Lumenal portion of the chain corresponds to 473-480 (GQSLSWYN). A helical membrane pass occupies residues 481-501 (YFYIAVCLYGTATVAKIILIH). The Cytoplasmic portion of the chain corresponds to 502-515 (TLAKRFYYVNASDL). Residues 516–538 (YLGELFFDTSLFVHCGFLVALTA) traverse the membrane as a helical segment. Topologically, residues 539-542 (QGFC) are lumenal. A helical membrane pass occupies residues 543–562 (SAFMSAVWVAFPLLTKLCVY). At 563-573 (KDFKKHGAKGR) the chain is on the cytoplasmic side. The helical transmembrane segment at 574-594 (FIALYLLGMFIPYLYGLYLIW) threads the bilayer. Residues 595–615 (AVFEMFTPILGRSGSEIPPDV) are Lumenal-facing. A helical transmembrane segment spans residues 616–636 (VLASILAVCVMILSSYFITFI). The Cytoplasmic portion of the chain corresponds to 637 to 645 (YLVNSTKKT). A helical transmembrane segment spans residues 646–666 (ILTLILVCAVTFLLVCSGAFF). The Lumenal segment spans residues 667-898 (PYSSNPDSPK…WVSTYSLFVF (232 aa)). Asparagine 724 carries an N-linked (GlcNAc...) asparagine glycan.

Belongs to the peptidase M28 family. The cofactor is Zn(2+). Widely expressed, with highest levels in ovary, kidney, hypothalamus and hippocampus. Within the ovarian follicle, expressed in granulosa cells, but not in oocytes. Present in both preantral and antral follicles, but not in atretic antral follicle.

It is found in the endoplasmic reticulum membrane. Functionally, within the ovary, required for the organization of somatic cells and oocytes into discrete follicular structures. This Rattus norvegicus (Rat) protein is Endoplasmic reticulum metallopeptidase 1.